A 204-amino-acid polypeptide reads, in one-letter code: Casparian strip membrane protein 3 (204 aa).

The Cytoplasmic portion of the chain corresponds to 1–41 (MKNESTFIDVPADSSSAMKGKAPLIGVAKDHTASGSGGYNR). A helical transmembrane segment spans residues 42–62 (GLSIFDFLLRLAAIVAASVAA). Topologically, residues 63–92 (GTMFTSDETLPFFTQFLQFQAGYDDLPTFQ) are extracellular. Residues 93 to 113 (FFVISMSLVSGYIVLSLPISV) form a helical membrane-spanning segment. At 114–125 (VTIVRPLAAAPR) the chain is on the cytoplasmic side. Residues 126–146 (LLLLVLDTAVMGLTMAAASSA) form a helical membrane-spanning segment. Topologically, residues 147–204 (AAISYVAHNGNQNTNWLPICQQFGDFCQKTSGGCGLFLCRRRVFHDPGCPLRSRSQRH) are extracellular.

Belongs to the Casparian strip membrane proteins (CASP) family. Homodimer and heterodimers.

The protein resides in the cell membrane. In terms of biological role, regulates membrane-cell wall junctions and localized cell wall deposition. Required for establishment of the Casparian strip membrane domain (CSD) and the subsequent formation of Casparian strips, a cell wall modification of the root endodermis that determines an apoplastic barrier between the intraorganismal apoplasm and the extraorganismal apoplasm and prevents lateral diffusion. This Raphanus sativus (Radish) protein is Casparian strip membrane protein 3.